Consider the following 417-residue polypeptide: MSSKYPRSVRCCLPLCALTLEAALILLFYFFTHYDASLEDQKGLVASYQVGQDLTVMAAIGFGFLTSSFRRHSWSSVAFNLFMLALGVQWAILLDGFLSQFPPGKVVITLFSIRLATMSALSVLISAGAVLGYVNLVQLVVMVLVEVTALGTMRMVISNIFNTDYHMNMTHFYVFAAYFGVTVAWCLPKPLPDIKEDKDQIATIPSLSAMLGTLFLWMFWPSFNSALLRSPIERKNAVFNTYYALAVSVVTAISVSSLAHPQGKINMTYMHNAVLAGGVAVGTSCHLITSPWLAMVLGLVAGLISIGGAKCLPGCCNRVLGIHDSSVMHYNFSLLGLLGEITYIVLMVLHTVGAGNGMVGFQVLVSTGELSLALAIAVTSGLLTGLLLNLKIWKAPHAAKYFDDQVFWKFPHLAVGF.

Helical transmembrane passes span 12–32, 44–64, 77–97, 125–145, 172–192, 203–223, 238–258, 265–285, 287–307, 331–351, and 358–378; these read CLPLCALTLEAALILLFYFFT, LVASYQVGQDLTVMAAIGFGF, VAFNLFMLALGVQWAILLDGF, ISAGAVLGYVNLVQLVVMVLV, FYVFAAYFGVTVAWCLPKPLP, TIPSLSAMLGTLFLWMFWPSF, VFNTYYALAVSVVTAISVSSL, INMTYMHNAVLAGGVAVGTSC, LITSPWLAMVLGLVAGLISIG, NFSLLGLLGEITYIVLMVLHT, and MVGFQVLVSTGELSLALAIAV.

It belongs to the ammonium transporter (TC 2.A.49) family. Rh subfamily.

Its subcellular location is the membrane. May be part of an oligomeric complex which is likely to have a transport or channel function in the erythrocyte membrane. The polypeptide is RH-like protein IC (Gorilla gorilla gorilla (Western lowland gorilla)).